We begin with the raw amino-acid sequence, 886 residues long: MRRSAAPSQVQGKSFKKTRFIPPGRSNADVSKEITKMSPDPKLFQGAEQSQNDPGVCSSNPCPSEGIPREVGDGTRVDPLPPVHSASKEITESKAQEEEASSLLKYFSVVWCKASKKKHKKWEGDAILIVRGRSFTLKDLEGKDIGRGIGYKFKDLENVEEGQTLIIGGKEIEILGTISSDDFNSGKCFQHGSGSPAVPSSQAARKCFSNPFKSVCQSTQAQGKRWNDCRPRHNPCTPNALVMPRPDENHQRMFNRHCSPIVDVVIDPHLVHHLRPHQKDGIIFLYECVMGMRAVGKCGAILADEMGLGKTLQCISLIWTLQCQGPYGGKPVIKKTLIVTPGSLVNNWRKEFQKWLGSERIKIFTVDQDHKVEEFINSTFHSVLIISYEMLLRSLDQIKTIPFGLLICDEGHRLKNSSIKTTTALSSLSCEKTVILTGTPVQNDLQEFFALVDFVNPGILGSLSSYRKIYEEPIIISREPSSSKEERELGERRATELTRLTGRFILRRTQEVINKYLPPKIENVVFCRPGALQIELYRKLLRSQSVRFCLQGLLENSAHLICIGALKKLCNHPCLLFSSVKGKEFSSSCEENEERNLCQGLLSVFPAGYNPLQFSEEESGKLQVLVKLLAVIHELRPTEKVILVSNYRQTLNVLEEVCKRHGYACARLDGQTPVSQRQHIVDSFNSKYSTDFIFLLSSKAGGVGLNLIGGSHLILYDIDWNPATDIQAMSRVWRDGQKHPVHIYRLLTTGTIEEKIYQRQISKQGLSGAVVDLTRSSEHIQFSVEELKNLFTLHESSHCVTHDLLDCECTGEKGHTEDASEGPVASRQCQFGPQKSDALRPLSMSQLKQWKHFSGDHLNLPDPFLERIRENVSFFFQNITNQAPAV.

The span at 1-12 (MRRSAAPSQVQG) shows a compositional bias: polar residues. The interval 1-95 (MRRSAAPSQV…ASKEITESKA (95 aa)) is disordered. Position 14 is a phosphoserine (Ser-14). Over residues 47-62 (AEQSQNDPGVCSSNPC) the composition is skewed to polar residues. Composition is skewed to basic and acidic residues over residues 67 to 76 (IPREVGDGTR) and 86 to 95 (ASKEITESKA). A Helicase ATP-binding domain is found at 291 to 458 (GMRAVGKCGA…FALVDFVNPG (168 aa)). 304-311 (DEMGLGKT) provides a ligand contact to ATP. A DEGH box motif is present at residues 409–412 (DEGH). The region spanning 627 to 788 (KLLAVIHELR…HIQFSVEELK (162 aa)) is the Helicase C-terminal domain.

It belongs to the SNF2/RAD54 helicase family. In terms of assembly, interacts with RAD51 through the NH2-terminal domain.

The protein resides in the nucleus. In terms of biological role, involved in DNA repair and mitotic recombination. May play an active role in recombination processes in concert with other members of the RAD52 epistasis group. The polypeptide is DNA repair and recombination protein RAD54B (Rad54b) (Mus musculus (Mouse)).